A 2136-amino-acid chain; its full sequence is MKQKLPKKKSLYKNLDLDEIQKIQNLGNPYTKWSLIRLLIAIFSNKRNFSTLLDFQILTSLFFRDLYNSKKKKKFLLNILVFLTLPFFVYILIDKSIVEQQNFDFLKIQKQNFIEKNNKSILKNNFYFLNTKFDIFLHNFFSLKKKKWYKNSLLNLIDFRSILKKKEILNLHWWKFLVLEQIQSNWKISEESLSELKIVLEQKNIDELKHFFEFYINQKIYPNNNWEYYFYSIFINQLKIDIKNSKYNKNSIGFEVFLAFCEKLLFEVEFLSKPNNNNLQMKLNCLENFSFLDIFCILNKKLPWVNKKIFKNLQNFNESDKKLIESFFLLKIKGNLYFKNYIEFVTWQSYKKDCLDFNKFNELNNSEIYIKIEELFSDYIYKFSKYILYEGKKSKTIIKQSFNNNIYYKKLNSIFNFNTIFYFDSNNLLFDWLKKNYYINNKPFLKSFLIYSSISNQFILFFKQKNSKSFNKNLVKKNSKDVITNVFSKENKIEINNFSKSIYYAFFEILSINEIDNKFVINKISLKNINKKKQKRFYLNKIKSSDNFRFINLWKIKNYSSQQFVSNNSFLLNPAFEILQQNYYLKKKNILFFKKLNEVFSNFFYFQYYKCKKLNIFLKFASLEKILKKRNKKFTISIKLFKKFYKNKLNENGEYKIESQILQNEKELNKKRKKNFQFNPNIKILSFYNSSKKNIYLQNKYFFNKNLINNKLITWKKISNKLVISNSEYNKIIWNKKNMKFFSFSKNSVLDTFFFNKKSFNIITVIFDKLKKIQLNFQEIQKILNCFSLFFNSKNIKKTKIFKNSYFINENLTTTFSFNDKEFNIFFLELFISEINNDFLMRFFKKYLYYRIYKDKEILFNPIENRQLLQNFFEKTKILTFIDFLQDPELNYNNRFIFHLEKKTIKNNNLLYLRLLKIFLKDKRNFLLINEIKSFIEKKNNLFIKSQLSNVLLVKNSYKFFDNIFNFHFLKQKEKNIEIILNNQNYFEKSLLKKTYLKNLNLNNSYSKFSYKIFIFQLLNILNKNNYKTFQWISELIFYSKNLNYKIQNKIEKNNYCYNKNISYKKKKIKTVNFFEKNNLFQTNNSWFFTLEWWEYNTYILLQIIQETFFQITDVLEYFKKKKIIEKNLKFFLKSKKISLKTLSFHNFKLKWNLRFFNEINYKKNYLLNFLWSDFNLINNCNNLYWVIFSLVIFIFLYYQKIFSIIIGSDCFHLWKNFEIIQYLTDRSRSLYFTKLTRRNKTALNKTENLLSYFFQNLTHYITNIKFYLLTKKNLKKWLINNKTLDLSRRKRKLLVQSLITHNKIQNYGFELNSNKQFFTSYFGYQITNQQGLLYFQYLAQFFQKNLINNSLDLANKWIVFSFWHKIFSSQKLRQTNNIELGFQNIPVPLQFGLSYSKGILLIGPIETGRSYLIKNLAAESYVPLFKISINKLLYNKPDVITESWMNILIESLRRLNLTLDFAKKMSPCIIWIQNIHQLNVNRLTQNVESDPTFLLGILLKYFQTDFSKTKKNNIIVIGSTHLPKKVDPALISPNRLDKIINVRLFNISQRKKQFPLLLKKKNFQLKENLFFLNEFGSRTMGYNLRDLSALTNEVLLISITKNRSFIDTDTLKLAFHRQIFGLTYTNNKLNFDRIFKIVIYKVGKTIIQNILIKSSSMNLLNIGNFLWKKNFYYLSKWYLEPSIDESIIKELTILTHILACLAGTAARDSWFLLEKKAESLLPIDKLVENDFTLAFSILESFFSEFPWLEICQTNVVNSKKNKIIEFSTKNSMNIMQNGIFAIANKKFIYTQNHLQYKSSLSQQISFNKKKNYEFKNTSWSPRFWRLSFFRSNLFDWIKRPNDFEFSYKFGFTKKKEYLFSANLQKKNNYGQFIEKKKKEQLLYERILPRIRRRNVQELESQFEEILLEEQFEILGFFRLSEQYPMEYQLYNKPRLFIGKRILWDPIGLFFQIRHFVFSRREFFVDEEMLRRLYVTYGARRERERSRSSQKIKQFFLCRGYNKDLISKLSIRWWSQLPINEKKNIDTLKRIEHISIQLKRPQIFTPVYLYQRWLIENSPEKFFRFELLTHRKKWLKINSLLLNDSFIYTTLLEIYEYLLHFFIANKKLLNQMTKILLKKGWLFENEIETIINETRQ.

1404-1411 (GPIETGRS) contributes to the ATP binding site.

The protein belongs to the Ycf2 family.

The protein resides in the plastid. Its subcellular location is the chloroplast stroma. Its function is as follows. Probable ATPase of unknown function. Its presence in a non-photosynthetic plant (Epifagus virginiana) and experiments in tobacco indicate that it has an essential function which is probably not related to photosynthesis. This chain is Protein Ycf2, found in Marchantia polymorpha (Common liverwort).